The primary structure comprises 86 residues: Large ribosomal subunit protein uL23 (86 aa).

It belongs to the universal ribosomal protein uL23 family. As to quaternary structure, part of the 50S ribosomal subunit. Contacts protein L29.

Functionally, binds to 23S rRNA. One of the proteins that surrounds the polypeptide exit tunnel on the outside of the ribosome. This chain is Large ribosomal subunit protein uL23, found in Methanosphaera stadtmanae (strain ATCC 43021 / DSM 3091 / JCM 11832 / MCB-3).